The following is a 324-amino-acid chain: Probable tRNA pseudouridine synthase B (324 aa).

Catalysis depends on Asp-72, which acts as the Nucleophile. The PUA domain occupies 239–314; sequence LPRVVILDSA…LVIETRKVFM (76 aa).

Belongs to the pseudouridine synthase TruB family. Type 2 subfamily.

It catalyses the reaction uridine(55) in tRNA = pseudouridine(55) in tRNA. Its function is as follows. Could be responsible for synthesis of pseudouridine from uracil-55 in the psi GC loop of transfer RNAs. The protein is Probable tRNA pseudouridine synthase B of Methanothermobacter thermautotrophicus (strain ATCC 29096 / DSM 1053 / JCM 10044 / NBRC 100330 / Delta H) (Methanobacterium thermoautotrophicum).